A 441-amino-acid chain; its full sequence is tRNA-2-methylthio-N(6)-dimethylallyladenosine synthase (441 aa).

The 116-residue stretch at 2-117 folds into the MTTase N-terminal domain; the sequence is KGLYIKSYGC…LPELLVKAHR (116 aa). Residues cysteine 11, cysteine 47, cysteine 80, cysteine 157, cysteine 161, and cysteine 164 each coordinate [4Fe-4S] cluster. Positions 143 to 374 constitute a Radical SAM core domain; the sequence is KNQETSAFIS…QKLLREQQLA (232 aa).

It belongs to the methylthiotransferase family. MiaB subfamily. In terms of assembly, monomer. [4Fe-4S] cluster is required as a cofactor.

It localises to the cytoplasm. The catalysed reaction is N(6)-dimethylallyladenosine(37) in tRNA + (sulfur carrier)-SH + AH2 + 2 S-adenosyl-L-methionine = 2-methylsulfanyl-N(6)-dimethylallyladenosine(37) in tRNA + (sulfur carrier)-H + 5'-deoxyadenosine + L-methionine + A + S-adenosyl-L-homocysteine + 2 H(+). Functionally, catalyzes the methylthiolation of N6-(dimethylallyl)adenosine (i(6)A), leading to the formation of 2-methylthio-N6-(dimethylallyl)adenosine (ms(2)i(6)A) at position 37 in tRNAs that read codons beginning with uridine. This Ehrlichia canis (strain Jake) protein is tRNA-2-methylthio-N(6)-dimethylallyladenosine synthase.